A 692-amino-acid polypeptide reads, in one-letter code: Elongation factor G (692 aa).

One can recognise a tr-type G domain in the interval 8-282 (ENTRNIGIMA…AVIDYLPSPL (275 aa)). Residues 17–24 (AHIDAGKT), 81–85 (DTPGH), and 135–138 (NKMD) contribute to the GTP site.

The protein belongs to the TRAFAC class translation factor GTPase superfamily. Classic translation factor GTPase family. EF-G/EF-2 subfamily.

It localises to the cytoplasm. Functionally, catalyzes the GTP-dependent ribosomal translocation step during translation elongation. During this step, the ribosome changes from the pre-translocational (PRE) to the post-translocational (POST) state as the newly formed A-site-bound peptidyl-tRNA and P-site-bound deacylated tRNA move to the P and E sites, respectively. Catalyzes the coordinated movement of the two tRNA molecules, the mRNA and conformational changes in the ribosome. This chain is Elongation factor G, found in Bacillus cereus (strain AH820).